A 590-amino-acid chain; its full sequence is Cytidine monophosphate-N-acetylneuraminic acid hydroxylase (590 aa).

The region spanning 14 to 112 (LSPVEVASLK…VEMDENNRLL (99 aa)) is the Rieske domain. Positions 54, 56, 75, and 78 each coordinate [2Fe-2S] cluster.

The protein belongs to the CMP-Neu5Ac hydroxylase family. [2Fe-2S] cluster is required as a cofactor.

It is found in the cytoplasm. It catalyses the reaction CMP-N-acetyl-beta-neuraminate + 2 Fe(II)-[cytochrome b5] + O2 + 2 H(+) = CMP-N-glycoloyl-beta-neuraminate + 2 Fe(III)-[cytochrome b5] + H2O. Its pathway is amino-sugar metabolism; N-acetylneuraminate metabolism. Its function is as follows. Sialic acids are components of carbohydrate chains of glycoconjugates and are involved in cell-cell recognition and cell-pathogen interactions. Catalyzes the conversion of CMP-N-acetylneuraminic acid (CMP-Neu5Ac) into its hydroxylated derivative CMP-N-glycolylneuraminic acid (CMP-Neu5Gc), a sialic acid abundantly expressed at the surface of many cells. The protein is Cytidine monophosphate-N-acetylneuraminic acid hydroxylase of Pan troglodytes (Chimpanzee).